The sequence spans 368 residues: 3-dehydroquinate synthase (368 aa).

Residues 71–76 (DGEAFK), 105–109 (GVVGD), 129–130 (TT), Lys142, Lys151, and 169–172 (TLRT) each bind NAD(+). Residues Glu184, His247, and His264 each coordinate Zn(2+).

Belongs to the sugar phosphate cyclases superfamily. Dehydroquinate synthase family. It depends on Co(2+) as a cofactor. Requires Zn(2+) as cofactor. NAD(+) serves as cofactor.

Its subcellular location is the cytoplasm. It catalyses the reaction 7-phospho-2-dehydro-3-deoxy-D-arabino-heptonate = 3-dehydroquinate + phosphate. It functions in the pathway metabolic intermediate biosynthesis; chorismate biosynthesis; chorismate from D-erythrose 4-phosphate and phosphoenolpyruvate: step 2/7. Functionally, catalyzes the conversion of 3-deoxy-D-arabino-heptulosonate 7-phosphate (DAHP) to dehydroquinate (DHQ). The protein is 3-dehydroquinate synthase of Cupriavidus necator (strain ATCC 17699 / DSM 428 / KCTC 22496 / NCIMB 10442 / H16 / Stanier 337) (Ralstonia eutropha).